Reading from the N-terminus, the 507-residue chain is ATP synthase subunit alpha, chloroplastic (507 aa).

170–177 contacts ATP; that stretch reads GDRQTGKT.

The protein belongs to the ATPase alpha/beta chains family. In terms of assembly, F-type ATPases have 2 components, CF(1) - the catalytic core - and CF(0) - the membrane proton channel. CF(1) has five subunits: alpha(3), beta(3), gamma(1), delta(1), epsilon(1). CF(0) has four main subunits: a, b, b' and c.

The protein resides in the plastid. It localises to the chloroplast thylakoid membrane. The enzyme catalyses ATP + H2O + 4 H(+)(in) = ADP + phosphate + 5 H(+)(out). Its function is as follows. Produces ATP from ADP in the presence of a proton gradient across the membrane. The alpha chain is a regulatory subunit. In Liriodendron tulipifera (Tuliptree), this protein is ATP synthase subunit alpha, chloroplastic.